The chain runs to 122 residues: S-adenosylmethionine decarboxylase proenzyme (122 aa).

Residue S69 is the Schiff-base intermediate with substrate; via pyruvic acid of the active site. Pyruvic acid (Ser); by autocatalysis is present on S69. Residue H74 is the Proton acceptor; for processing activity of the active site. C89 acts as the Proton donor; for catalytic activity in catalysis.

It belongs to the prokaryotic AdoMetDC family. Type 1 subfamily. Heterotetramer of two alpha and two beta chains arranged as a dimer of alpha/beta heterodimers. Pyruvate serves as cofactor. Is synthesized initially as an inactive proenzyme. Formation of the active enzyme involves a self-maturation process in which the active site pyruvoyl group is generated from an internal serine residue via an autocatalytic post-translational modification. Two non-identical subunits are generated from the proenzyme in this reaction, and the pyruvate is formed at the N-terminus of the alpha chain, which is derived from the carboxyl end of the proenzyme. The post-translation cleavage follows an unusual pathway, termed non-hydrolytic serinolysis, in which the side chain hydroxyl group of the serine supplies its oxygen atom to form the C-terminus of the beta chain, while the remainder of the serine residue undergoes an oxidative deamination to produce ammonia and the pyruvoyl group blocking the N-terminus of the alpha chain.

It carries out the reaction S-adenosyl-L-methionine + H(+) = S-adenosyl 3-(methylsulfanyl)propylamine + CO2. It participates in amine and polyamine biosynthesis; S-adenosylmethioninamine biosynthesis; S-adenosylmethioninamine from S-adenosyl-L-methionine: step 1/1. Functionally, catalyzes the decarboxylation of S-adenosylmethionine to S-adenosylmethioninamine (dcAdoMet), the propylamine donor required for the synthesis of the polyamines spermine and spermidine from the diamine putrescine. The chain is S-adenosylmethionine decarboxylase proenzyme from Saccharolobus islandicus (strain L.S.2.15 / Lassen #1) (Sulfolobus islandicus).